Consider the following 479-residue polypeptide: Trigger factor (479 aa).

In terms of domain architecture, PPIase FKBP-type spans 174 to 261; sequence GDIAVVSFSG…LKELKTRELP (88 aa). Positions 437–479 are disordered; sequence KVLESEAKTSKPAAKSKGSKTKSTKTKTNKAKTEKPASDKTKS. Basic residues predominate over residues 453–466; that stretch reads KGSKTKSTKTKTNK. Over residues 467 to 479 the composition is skewed to basic and acidic residues; the sequence is AKTEKPASDKTKS.

It belongs to the FKBP-type PPIase family. Tig subfamily.

Its subcellular location is the cytoplasm. The enzyme catalyses [protein]-peptidylproline (omega=180) = [protein]-peptidylproline (omega=0). Its function is as follows. Involved in protein export. Acts as a chaperone by maintaining the newly synthesized protein in an open conformation. Functions as a peptidyl-prolyl cis-trans isomerase. The chain is Trigger factor from Prochlorococcus marinus (strain MIT 9303).